We begin with the raw amino-acid sequence, 274 residues long: Diaminopimelate epimerase (274 aa).

Substrate-binding residues include Asn11, Gln44, and Asn64. Cys73 (proton donor) is an active-site residue. Residues 74-75 (GN), Asn157, Asn190, and 208-209 (ER) contribute to the substrate site. Cys217 acts as the Proton acceptor in catalysis. 218 to 219 (GS) is a substrate binding site.

Belongs to the diaminopimelate epimerase family. In terms of assembly, homodimer.

It localises to the cytoplasm. It catalyses the reaction (2S,6S)-2,6-diaminopimelate = meso-2,6-diaminopimelate. The protein operates within amino-acid biosynthesis; L-lysine biosynthesis via DAP pathway; DL-2,6-diaminopimelate from LL-2,6-diaminopimelate: step 1/1. Catalyzes the stereoinversion of LL-2,6-diaminopimelate (L,L-DAP) to meso-diaminopimelate (meso-DAP), a precursor of L-lysine and an essential component of the bacterial peptidoglycan. This is Diaminopimelate epimerase from Haemophilus ducreyi (strain 35000HP / ATCC 700724).